Here is a 71-residue protein sequence, read N- to C-terminus: UPF0346 protein SZO_05010 (71 aa).

It belongs to the UPF0346 family.

The polypeptide is UPF0346 protein SZO_05010 (Streptococcus equi subsp. zooepidemicus (strain H70)).